We begin with the raw amino-acid sequence, 345 residues long: Protein-arginine kinase (345 aa).

One can recognise a Phosphagen kinase C-terminal domain in the interval 15-245 (LVISSRIRLA…LQIINQEIIS (231 aa)). Residues 18–22 (SSRIR), H82, R116, 167–171 (RASVM), and 198–203 (RGLYGE) contribute to the ATP site. An RDXXRA motif of the pArg binding pocket involved in allosteric regulation motif is present at residues 328–333 (RDFNRA).

The protein belongs to the ATP:guanido phosphotransferase family.

It carries out the reaction L-arginyl-[protein] + ATP = N(omega)-phospho-L-arginyl-[protein] + ADP + H(+). With respect to regulation, appears to be allosterically activated by the binding of pArg-containing polypeptides to the pArg-binding pocket localized in the C-terminal domain of McsB. Functionally, catalyzes the specific phosphorylation of arginine residues in proteins. This Clostridium kluyveri (strain NBRC 12016) protein is Protein-arginine kinase.